We begin with the raw amino-acid sequence, 147 residues long: Hemoglobin subunit gamma (147 aa).

The Globin domain maps to 3-147 (HFTAEEKAAI…VATALAHKYH (145 aa)). Heme b-binding residues include His-64 and His-93.

It belongs to the globin family. Heterotetramer of two alpha chains and two gamma chains. Red blood cells.

In terms of biological role, this protein functions as an embryonic globin, but the gene structure and chromosomal location resemble more closely the human gamma chain gene, which codes for a fetal globin. This chain is Hemoglobin subunit gamma (HBG), found in Oryctolagus cuniculus (Rabbit).